The sequence spans 66 residues: Light-harvesting protein B-800-850 alpha chain B (66 aa).

Residues 1–11 (MNQGRIWTVVN) are Cytoplasmic-facing. The chain crosses the membrane as a helical span at residues 12 to 35 (PGVGLPLLLGSVTVIAILVHYAVL). His31 contributes to the a bacteriochlorophyll binding site. The Periplasmic segment spans residues 36–66 (SNTTWFPKYWNGATVAAPAAAPAPAAPAAKK).

Belongs to the antenna complex alpha subunit family. As to quaternary structure, the core complex is formed by different alpha and beta chains, binding bacteriochlorophyll molecules, and arranged most probably in tetrameric structures disposed around the reaction center. The non-pigmented gamma chains may constitute additional components.

The protein localises to the cell inner membrane. Antenna complexes are light-harvesting systems, which transfer the excitation energy to the reaction centers. This chain is Light-harvesting protein B-800-850 alpha chain B (pucAB), found in Rhodopseudomonas palustris (strain ATCC BAA-98 / CGA009).